We begin with the raw amino-acid sequence, 1462 residues long: FYVE, RhoGEF and PH domain-containing protein 5 (1462 aa).

Disordered regions lie at residues 37–323, 492–512, 592–613, 670–718, 746–777, and 851–887; these read GRLP…SAEE, YVPETVPEETGPEAGSSAPGI, SGSFSQRNHLPSSGTSTPSSMV, HVDV…ASES, EDRSRPPFLPLPLTKPRSISFPSADTSDYENI, and CPISSAAPKEDLTSDEEQRSSEEEDSASRDPSVTHKV. Residues 72–82 are compositionally biased toward basic and acidic residues; the sequence is PLREDEPKDEG. 2 stretches are compositionally biased toward acidic residues: residues 95–106 and 137–151; these read SAEEEEEREEGG and EGTDLALEDEGEGCA. Residues 161–177 are compositionally biased toward basic and acidic residues; the sequence is SRSEEEEKLVQPHRECS. Acidic residues-rich tracts occupy residues 211–220 and 242–255; these read GEAEEDDEEG and MGQDAEDTSEEPPE. Residues 592–611 are compositionally biased toward polar residues; the sequence is SGSFSQRNHLPSSGTSTPSS. Positions 676–685 are enriched in low complexity; sequence SSSRSSSESS. Residues 858 to 887 show a composition bias toward basic and acidic residues; it reads PKEDLTSDEEQRSSEEEDSASRDPSVTHKV. The region spanning 892–1084 is the DH domain; the sequence is RALVIAQELL…SKVTDRANDS (193 aa). Positions 1113-1207 constitute a PH 1 domain; it reads EFLKEGTLMK…WYGCLSRALP (95 aa). An FYVE-type zinc finger spans residues 1242 to 1301; the sequence is VTHVMMCMNCGCDFSLTLRRHHCHACGKIVCRNCSRNKYPLKYLKDRMAKVCDGCFGELK. Zn(2+) is bound by residues Cys-1248, Cys-1251, Cys-1264, Cys-1267, Cys-1272, Cys-1275, Cys-1293, and Cys-1296. The PH 2 domain occupies 1363-1461; the sequence is GSAISGYLSR…WIEAMEDASV (99 aa).

Expressed in endothelial cells (at protein level).

It localises to the cytoplasm. It is found in the cytoskeleton. The protein localises to the cell projection. Its subcellular location is the ruffle membrane. The protein resides in the endoplasmic reticulum. It localises to the golgi apparatus. It is found in the early endosome. Functionally, activates CDC42, a member of the Ras-like family of Rho- and Rac proteins, by exchanging bound GDP for free GTP. Mediates VEGF-induced CDC42 activation. May regulate proangiogenic action of VEGF in vascular endothelial cells, including network formation, directional movement and proliferation. May play a role in regulating the actin cytoskeleton and cell shape. The chain is FYVE, RhoGEF and PH domain-containing protein 5 (FGD5) from Homo sapiens (Human).